A 151-amino-acid chain; its full sequence is UPF0756 membrane protein HSM_1471 (151 aa).

4 consecutive transmembrane segments (helical) span residues 1-21, 52-72, 81-101, and 123-143; these read MSLQ…LGVL, YGVN…IVSG, ALIH…AWFG, and ILGV…AGIL.

This sequence belongs to the UPF0756 family.

Its subcellular location is the cell membrane. This chain is UPF0756 membrane protein HSM_1471, found in Histophilus somni (strain 2336) (Haemophilus somnus).